The chain runs to 153 residues: Interleukin-2 (153 aa).

A signal peptide spans 1–20 (MYKVQLLSCIALTLALLTSS). O-linked (GalNAc...) threonine glycosylation is present at Thr23. Cys78 and Cys125 are joined by a disulfide. Asn111 is a glycosylation site (N-linked (GlcNAc...) asparagine).

This sequence belongs to the IL-2 family.

It localises to the secreted. In terms of biological role, cytokine produced by activated CD4-positive helper T-cells and to a lesser extend activated CD8-positive T-cells and natural killer (NK) cells that plays pivotal roles in the immune response and tolerance. Binds to a receptor complex composed of either the high-affinity trimeric IL-2R (IL2RA/CD25, IL2RB/CD122 and IL2RG/CD132) or the low-affinity dimeric IL-2R (IL2RB and IL2RG). Interaction with the receptor leads to oligomerization and conformation changes in the IL-2R subunits resulting in downstream signaling starting with phosphorylation of JAK1 and JAK3. In turn, JAK1 and JAK3 phosphorylate the receptor to form a docking site leading to the phosphorylation of several substrates including STAT5. This process leads to activation of several pathways including STAT, phosphoinositide-3-kinase/PI3K and mitogen-activated protein kinase/MAPK pathways. Functions as a T-cell growth factor and can increase NK-cell cytolytic activity as well. Promotes strong proliferation of activated B-cells and subsequently immunoglobulin production. Plays a pivotal role in regulating the adaptive immune system by controlling the survival and proliferation of regulatory T-cells, which are required for the maintenance of immune tolerance. Moreover, participates in the differentiation and homeostasis of effector T-cell subsets, including Th1, Th2, Th17 as well as memory CD8-positive T-cells. This chain is Interleukin-2 (IL2), found in Oryctolagus cuniculus (Rabbit).